The following is a 516-amino-acid chain: Probable D,D-dipeptide-binding periplasmic protein DdpA (516 aa).

An N-terminal signal peptide occupies residues methionine 1 to alanine 25.

This sequence belongs to the bacterial solute-binding protein 5 family. As to quaternary structure, the complex is composed of two ATP-binding proteins (DdpD and DdpF), two transmembrane proteins (DdpB and DdpC) and a solute-binding protein (DdpA).

The protein localises to the periplasm. Functionally, part of the ABC transporter complex DdpABCDF, which is probably involved in D,D-dipeptide transport. This is Probable D,D-dipeptide-binding periplasmic protein DdpA (ddpA) from Escherichia coli (strain K12).